The chain runs to 352 residues: Protein Wnt-4a (352 aa).

A signal peptide spans 1–22 (MSSEYLIRSLLMLFLALFSANA). 11 cysteine pairs are disulfide-bonded: C78/C89, C128/C136, C138/C155, C206/C220, C208/C215, C280/C312, C297/C307, C311/C351, C327/C342, C329/C339, and C334/C335. N-linked (GlcNAc...) asparagine glycosylation is present at N88. S212 carries the O-palmitoleoyl serine; by PORCN lipid modification. N298 carries N-linked (GlcNAc...) asparagine glycosylation.

Belongs to the Wnt family. Palmitoleoylation is required for efficient binding to frizzled receptors. Depalmitoleoylation leads to Wnt signaling pathway inhibition. As to expression, caudal forebrain and neural keel, the floor plate, the gill slit and the developing pronephros.

It is found in the secreted. The protein localises to the extracellular space. It localises to the extracellular matrix. Functionally, ligand for members of the frizzled family of seven transmembrane receptors. Plays an important role in embryonic development. This is Protein Wnt-4a (wnt4a) from Danio rerio (Zebrafish).